The sequence spans 340 residues: Fructose-bisphosphate aldolase (340 aa).

Residue Ser53 coordinates D-glyceraldehyde 3-phosphate. Asp95 functions as the Proton donor in the catalytic mechanism. 4 residues coordinate Zn(2+): His96, Asp131, Glu161, and His212. Gly213 is a binding site for dihydroxyacetone phosphate. His249 serves as a coordination point for Zn(2+). Residues 250 to 252 (GGS) and 271 to 274 (NLDT) each bind dihydroxyacetone phosphate.

It belongs to the class II fructose-bisphosphate aldolase family. The cofactor is Zn(2+).

It carries out the reaction beta-D-fructose 1,6-bisphosphate = D-glyceraldehyde 3-phosphate + dihydroxyacetone phosphate. It functions in the pathway carbohydrate degradation; glycolysis; D-glyceraldehyde 3-phosphate and glycerone phosphate from D-glucose: step 4/4. Catalyzes the aldol condensation of dihydroxyacetone phosphate (DHAP or glycerone-phosphate) with glyceraldehyde 3-phosphate (G3P) to form fructose 1,6-bisphosphate (FBP) in gluconeogenesis and the reverse reaction in glycolysis. The protein is Fructose-bisphosphate aldolase (fba) of Streptomyces galbus.